A 186-amino-acid chain; its full sequence is MKTAHEVRPGNVIMLDGNPWVVLKTETSRSGRNAAVVKLKLKNVLLDSTTETSFKGEDKLDVIVLDRLDCTYSYFADPMYVFMDEEFNQYDVEAENLGDAAAYITDGMEDVCQVTFYEEKAISVELPIIVTREVTYTEPSARGDTSGKVMKPATIAGGSTLSVADFVKTGDMIEIDTRTNEFKKRV.

Belongs to the elongation factor P family.

It is found in the cytoplasm. It functions in the pathway protein biosynthesis; polypeptide chain elongation. In terms of biological role, involved in peptide bond synthesis. Stimulates efficient translation and peptide-bond synthesis on native or reconstituted 70S ribosomes in vitro. Probably functions indirectly by altering the affinity of the ribosome for aminoacyl-tRNA, thus increasing their reactivity as acceptors for peptidyl transferase. The chain is Elongation factor P from Shewanella piezotolerans (strain WP3 / JCM 13877).